A 980-amino-acid chain; its full sequence is Valine--tRNA ligase (980 aa).

The 'HIGH' region motif lies at 43–53 (PNVTGTLHMGH). The 'KMSKS' region signature appears at 586–590 (KMSKS). Residue lysine 589 coordinates ATP. Residues 914–980 (LVDMDAERMR…AGLREQRGKL (67 aa)) are a coiled coil.

The protein belongs to the class-I aminoacyl-tRNA synthetase family. ValS type 1 subfamily. As to quaternary structure, monomer.

The protein resides in the cytoplasm. It catalyses the reaction tRNA(Val) + L-valine + ATP = L-valyl-tRNA(Val) + AMP + diphosphate. In terms of biological role, catalyzes the attachment of valine to tRNA(Val). As ValRS can inadvertently accommodate and process structurally similar amino acids such as threonine, to avoid such errors, it has a 'posttransfer' editing activity that hydrolyzes mischarged Thr-tRNA(Val) in a tRNA-dependent manner. This is Valine--tRNA ligase from Xanthomonas oryzae pv. oryzae (strain PXO99A).